Consider the following 241-residue polypeptide: Regulatory protein VirG (241 aa).

In terms of domain architecture, Response regulatory spans H3–L117. Residue D52 is modified to 4-aspartylphosphate. The ompR/PhoB-type DNA-binding region spans R129 to A229.

Post-translationally, phosphorylated by wide host range (WHR) VirA protein.

Its subcellular location is the cytoplasm. Its function is as follows. VirG is required for the positive regulation of at least two vir loci encoded by the Ri plasmid of A.rhizogenes. This Rhizobium rhizogenes (Agrobacterium rhizogenes) protein is Regulatory protein VirG (virG).